The primary structure comprises 470 residues: Uronate isomerase (470 aa).

This sequence belongs to the metallo-dependent hydrolases superfamily. Uronate isomerase family.

It catalyses the reaction D-glucuronate = D-fructuronate. The enzyme catalyses aldehydo-D-galacturonate = keto-D-tagaturonate. The protein operates within carbohydrate metabolism; pentose and glucuronate interconversion. This chain is Uronate isomerase, found in Shigella boydii serotype 18 (strain CDC 3083-94 / BS512).